Reading from the N-terminus, the 447-residue chain is ATP-dependent protease ATPase subunit HslU (447 aa).

ATP is bound by residues Ile17, 59-64 (GVGKTE), Asp256, Glu321, and Arg393.

It belongs to the ClpX chaperone family. HslU subfamily. A double ring-shaped homohexamer of HslV is capped on each side by a ring-shaped HslU homohexamer. The assembly of the HslU/HslV complex is dependent on binding of ATP.

The protein localises to the cytoplasm. Its function is as follows. ATPase subunit of a proteasome-like degradation complex; this subunit has chaperone activity. The binding of ATP and its subsequent hydrolysis by HslU are essential for unfolding of protein substrates subsequently hydrolyzed by HslV. HslU recognizes the N-terminal part of its protein substrates and unfolds these before they are guided to HslV for hydrolysis. This chain is ATP-dependent protease ATPase subunit HslU, found in Pseudomonas entomophila (strain L48).